A 240-amino-acid chain; its full sequence is Homeobox protein DLX-4 (240 aa).

Disordered stretches follow at residues aspartate 44–leucine 70 and leucine 175–serine 194. Positions leucine 116–leucine 175 form a DNA-binding region, homeobox.

Belongs to the distal-less homeobox family. In terms of tissue distribution, branchial arches, molar and incisor teeth and limbs.

The protein localises to the nucleus. Its function is as follows. May play a role in determining the production of hemoglobin S. May act as a repressor. During embryonic development, plays a role in palatogenesis. In Mus musculus (Mouse), this protein is Homeobox protein DLX-4 (Dlx4).